Consider the following 274-residue polypeptide: MSLQETIIQELGVKPVIDAQEEIRRSIDFLKRYLKKHPFLKTFVLGISGGQDSTLAGRLAQLAMEELRAETGDDSYKFIAVRLPYGVQADEADAQKALAFIQPDVSLVVNIKESADAMTAAVEATGSPVSDFNKGNIKARCRMIAQYALAGSHSGAVIGTDHAAENITGFFTKFGDGGADILPLYRLNKRQGKQLLQELGADPALYEKIPTADLEEDKPGLADEVALGVTYAEIDDYLEGKTISPEAQATIENWWHKGQHKRHLPITVFDDFWE.

Residue 46-53 participates in ATP binding; it reads GISGGQDS. Residue Asp52 coordinates Mg(2+). A deamido-NAD(+)-binding site is contributed by Arg140. Thr160 provides a ligand contact to ATP. Glu165 provides a ligand contact to Mg(2+). Positions 173 and 180 each coordinate deamido-NAD(+). Residues Lys189 and Thr211 each contribute to the ATP site. Residue 260-261 coordinates deamido-NAD(+); the sequence is HK.

The protein belongs to the NAD synthetase family. As to quaternary structure, homodimer.

It carries out the reaction deamido-NAD(+) + NH4(+) + ATP = AMP + diphosphate + NAD(+) + H(+). It participates in cofactor biosynthesis; NAD(+) biosynthesis; NAD(+) from deamido-NAD(+) (ammonia route): step 1/1. Functionally, catalyzes the ATP-dependent amidation of deamido-NAD to form NAD. Uses ammonia as a nitrogen source. The protein is NH(3)-dependent NAD(+) synthetase of Streptococcus pneumoniae (strain 70585).